We begin with the raw amino-acid sequence, 136 residues long: Large ribosomal subunit protein uL16 (136 aa).

This sequence belongs to the universal ribosomal protein uL16 family. Part of the 50S ribosomal subunit.

Binds 23S rRNA and is also seen to make contacts with the A and possibly P site tRNAs. In Rickettsia bellii (strain OSU 85-389), this protein is Large ribosomal subunit protein uL16.